The chain runs to 388 residues: 1-deoxy-D-xylulose 5-phosphate reductoisomerase (388 aa).

Residues Thr-13, Gly-14, Ser-15, Ile-16, Arg-40, Asn-41, and Asn-124 each coordinate NADPH. Position 125 (Lys-125) interacts with 1-deoxy-D-xylulose 5-phosphate. Glu-126 provides a ligand contact to NADPH. Asp-150 contacts Mn(2+). 1-deoxy-D-xylulose 5-phosphate-binding residues include Ser-151, Glu-152, Ser-176, and His-199. Glu-152 serves as a coordination point for Mn(2+). Gly-205 is an NADPH binding site. 4 residues coordinate 1-deoxy-D-xylulose 5-phosphate: Ser-212, Asn-217, Lys-218, and Glu-221. A Mn(2+)-binding site is contributed by Glu-221.

Belongs to the DXR family. In terms of assembly, homodimer. Requires Mg(2+) as cofactor. Mn(2+) is required as a cofactor. The cofactor is Co(2+).

The catalysed reaction is 2-C-methyl-D-erythritol 4-phosphate + NADP(+) = 1-deoxy-D-xylulose 5-phosphate + NADPH + H(+). The protein operates within isoprenoid biosynthesis; isopentenyl diphosphate biosynthesis via DXP pathway; isopentenyl diphosphate from 1-deoxy-D-xylulose 5-phosphate: step 1/6. Its activity is regulated as follows. Competitively inhibited by the antibiotic fosmidomycin. Its function is as follows. Catalyzes the NADPH-dependent rearrangement and reduction of 1-deoxy-D-xylulose-5-phosphate (DXP) to 2-C-methyl-D-erythritol 4-phosphate (MEP). Cannot use NADH instead of NADPH as the reducing agent. The chain is 1-deoxy-D-xylulose 5-phosphate reductoisomerase from Zymomonas mobilis subsp. mobilis (strain ATCC 31821 / ZM4 / CP4).